Here is a 378-residue protein sequence, read N- to C-terminus: Chaperone protein DnaJ (378 aa).

Positions 5-70 (DYYEVLGVAK…QKRAAYDQYG (66 aa)) constitute a J domain. The segment at 138–216 (GYDTQIRVPS…CHGSGKVKET (79 aa)) adopts a CR-type zinc-finger fold. The Zn(2+) site is built by Cys151, Cys154, Cys168, Cys171, Cys190, Cys193, Cys204, and Cys207. CXXCXGXG motif repeat units follow at residues 151 to 158 (CEVCHGSG), 168 to 175 (CPTCHGQG), 190 to 197 (CPKCHGTG), and 204 to 211 (CAHCHGSG).

It belongs to the DnaJ family. As to quaternary structure, homodimer. It depends on Zn(2+) as a cofactor.

It is found in the cytoplasm. Its function is as follows. Participates actively in the response to hyperosmotic and heat shock by preventing the aggregation of stress-denatured proteins and by disaggregating proteins, also in an autonomous, DnaK-independent fashion. Unfolded proteins bind initially to DnaJ; upon interaction with the DnaJ-bound protein, DnaK hydrolyzes its bound ATP, resulting in the formation of a stable complex. GrpE releases ADP from DnaK; ATP binding to DnaK triggers the release of the substrate protein, thus completing the reaction cycle. Several rounds of ATP-dependent interactions between DnaJ, DnaK and GrpE are required for fully efficient folding. Also involved, together with DnaK and GrpE, in the DNA replication of plasmids through activation of initiation proteins. This Burkholderia vietnamiensis (strain G4 / LMG 22486) (Burkholderia cepacia (strain R1808)) protein is Chaperone protein DnaJ.